A 253-amino-acid chain; its full sequence is Claudin domain-containing protein 1 (253 aa).

A helical transmembrane segment spans residues 5-25 (FATAFVIACVLSLISTIYMAA). N-linked (GlcNAc...) asparagine glycosylation is found at asparagine 42 and asparagine 72. 3 consecutive transmembrane segments (helical) span residues 141–161 (FLLPFVSLGLMCFGALIGLCA), 175–195 (ILHLLAGLCTLGSVSCYVAGI), and 216–236 (FCLACVSAPLQFMASALFIWA).

The protein belongs to the PMP-22/EMP/MP20 family. In terms of tissue distribution, widely distributed in the adult CNS with highest expression in the corpus callosum, caudate nucleus, cerebral cortex, medulla, putamen, spinal cord, substantia nigra and subthalamic nucleus. Weak expression was detected in the adult heart.

It is found in the cell junction. The protein localises to the tight junction. It localises to the cell membrane. In terms of biological role, plays a role in negatively regulating the permeability of cells to small molecules. This Homo sapiens (Human) protein is Claudin domain-containing protein 1 (CLDND1).